The primary structure comprises 1607 residues: Laminin subunit gamma-1 (1607 aa).

Positions 1–33 (MTGGGRAALALQPRGRLWPLLAVLAAVAGCVRA) are cleaved as a signal peptide. Positions 44–283 (RPQRCMPEFV…AISDFAVGGR (240 aa)) constitute a Laminin N-terminal domain. N-linked (GlcNAc...) asparagine glycans are attached at residues asparagine 58 and asparagine 132. 15 disulfides stabilise this stretch: cysteine 284-cysteine 293, cysteine 286-cysteine 303, cysteine 305-cysteine 314, cysteine 340-cysteine 349, cysteine 342-cysteine 365, cysteine 368-cysteine 377, cysteine 380-cysteine 393, cysteine 396-cysteine 408, cysteine 398-cysteine 414, cysteine 416-cysteine 425, cysteine 428-cysteine 440, cysteine 443-cysteine 454, cysteine 445-cysteine 461, cysteine 463-cysteine 472, and cysteine 475-cysteine 490. Laminin EGF-like domains are found at residues 284 to 339 (CKCN…ESLP), 340 to 395 (CDCN…ACSP), 396 to 442 (CHCS…GCRP), and 443 to 492 (CSCD…GCTP). Residues 493–502 (CFCFGHSSVC) enclose the Laminin EGF-like 5; first part domain. The Laminin IV type A domain occupies 512-687 (DISSTFQIDE…PGVPATWVES (176 aa)). N-linked (GlcNAc...) asparagine glycosylation is found at asparagine 574 and asparagine 648. Residues 688-721 (CTCPVGYGGQFCETCLPGYRRETPSLGPYSPCVL) form the Laminin EGF-like 5; second part domain. Cystine bridges form between cysteine 722–cysteine 731, cysteine 724–cysteine 738, cysteine 740–cysteine 749, cysteine 752–cysteine 768, cysteine 771–cysteine 779, cysteine 773–cysteine 790, cysteine 793–cysteine 802, cysteine 805–cysteine 823, cysteine 826–cysteine 840, cysteine 828–cysteine 847, cysteine 850–cysteine 859, cysteine 862–cysteine 879, cysteine 882–cysteine 896, cysteine 884–cysteine 903, cysteine 905–cysteine 914, cysteine 917–cysteine 930, cysteine 933–cysteine 945, cysteine 935–cysteine 952, cysteine 954–cysteine 963, cysteine 966–cysteine 978, cysteine 981–cysteine 993, cysteine 983–cysteine 999, cysteine 1001–cysteine 1010, and cysteine 1013–cysteine 1026. Laminin EGF-like domains are found at residues 722–770 (CTCN…DCQP) and 771–825 (CPCP…LCRP). One can recognise a Laminin EGF-like 8; nidogen-binding domain in the interval 826-881 (CQCNDNIDPNAVGNCNRLTGECLKCIYNTAGFYCDRCKEGFFGNPLAPNPADKCKA). Laminin EGF-like domains lie at 882-932 (CACN…GCER), 933-980 (CDCH…GCKP), and 981-1028 (CDCH…GCQE). Residues asparagine 1020 and asparagine 1105 are each glycosylated (N-linked (GlcNAc...) asparagine). Residues 1029 to 1607 (CPACYRLVKD…CFNTPSIEKP (579 aa)) are domain II and I. Positions 1034–1594 (RLVKDKAAEH…HNLEDIKKTL (561 aa)) form a coiled coil. Serine 1147 bears the Phosphoserine mark. N-linked (GlcNAc...) asparagine glycans are attached at residues asparagine 1159, asparagine 1173, asparagine 1203, asparagine 1221, asparagine 1239, asparagine 1378, asparagine 1393, and asparagine 1437. At serine 1491 the chain carries Phosphoserine.

As to quaternary structure, laminin is a complex glycoprotein, consisting of three different polypeptide chains (alpha, beta, gamma), which are bound to each other by disulfide bonds into a cross-shaped molecule comprising one long and three short arms with globules at each end. Gamma-1 is a subunit of laminin-1 (laminin-111 or EHS laminin), laminin-2 (laminin-211 or merosin), laminin-3 (laminin-121 or S-laminin), laminin-4 (laminin-221 or S-merosin), laminin-6 (laminin-311 or K-laminin), laminin-7 (laminin-321 or KS-laminin), laminin-8 (laminin-411), laminin-9 (laminin-421), laminin-10 (laminin-511) and laminin-11 (laminin-521). Interacts with SVEP1. Found in the basement membranes (major component).

Its subcellular location is the secreted. It localises to the extracellular space. The protein localises to the extracellular matrix. It is found in the basement membrane. Its function is as follows. Binding to cells via a high affinity receptor, laminin is thought to mediate the attachment, migration and organization of cells into tissues during embryonic development by interacting with other extracellular matrix components. The protein is Laminin subunit gamma-1 (Lamc1) of Mus musculus (Mouse).